A 160-amino-acid chain; its full sequence is MPSFDIVSEIDTVELRNAVDNSNRELSTRFDFRNVQASFELVEQTVKVSAEGDFQLKQMRDILRGHLAKRGVDANSMDAKTAEQTGKNWHQDIVFLQGIETPMAKKIVKLIKDAKLKVQASIQGDKVRVTGKKRDDLQETIAAIRAAELGQPFQFNNFRD.

The protein belongs to the YajQ family.

Functionally, nucleotide-binding protein. This Vibrio vulnificus (strain CMCP6) protein is Nucleotide-binding protein VV1_2655.